Here is a 176-residue protein sequence, read N- to C-terminus: Probable DNA-directed RNA polymerase subunit delta (176 aa).

An HTH HARE-type domain is found at 14–81 (KSFIDMAYTL…GENLWGLRDW (68 aa)). Residues 114–176 (LGEDEMDDDD…VFEDEEDFND (63 aa)) form a disordered region. Acidic residues-rich tracts occupy residues 116–145 (EDEM…QVEE) and 153–176 (VIEE…DFND).

Belongs to the RpoE family. RNAP is composed of a core of 2 alpha, a beta and a beta' subunits. The core is associated with a delta subunit and one of several sigma factors.

Its function is as follows. Participates in both the initiation and recycling phases of transcription. In the presence of the delta subunit, RNAP displays an increased specificity of transcription, a decreased affinity for nucleic acids, and an increased efficiency of RNA synthesis because of enhanced recycling. This is Probable DNA-directed RNA polymerase subunit delta from Staphylococcus aureus (strain JH1).